The sequence spans 188 residues: GMP synthase [glutamine-hydrolyzing] subunit A (188 aa).

One can recognise a Glutamine amidotransferase type-1 domain in the interval 1–188 (MIVILNNGGQ…FCKVCGLLGE (188 aa)). The active-site Nucleophile is the C76. Residues H163 and E165 contribute to the active site.

In terms of assembly, heterodimer composed of a glutamine amidotransferase subunit (A) and a GMP-binding subunit (B).

It carries out the reaction XMP + L-glutamine + ATP + H2O = GMP + L-glutamate + AMP + diphosphate + 2 H(+). Its pathway is purine metabolism; GMP biosynthesis; GMP from XMP (L-Gln route): step 1/1. Its function is as follows. Catalyzes the synthesis of GMP from XMP. The protein is GMP synthase [glutamine-hydrolyzing] subunit A of Methanococcus aeolicus (strain ATCC BAA-1280 / DSM 17508 / OCM 812 / Nankai-3).